Consider the following 1501-residue polypeptide: RE1-silencing transcription factor A (1501 aa).

A C2H2-type 1 zinc finger spans residues 158–180 (FRCKPCQYKAESEEEFVHHIKIH). The span at 186 to 200 (VDNDSKKNPQGKEAD) shows a compositional bias: basic and acidic residues. The tract at residues 186-209 (VDNDSKKNPQGKEADSSIPEESDI) is disordered. 7 C2H2-type zinc fingers span residues 214–236 (IQCD…LKHH), 246–268 (YKCT…LRNH), 274–296 (YTCS…IRTH), 302–324 (YQCI…MRTH), 330–353 (FKCE…RQVH), 359–381 (LTCP…VELH), and 387–410 (FLCP…KSRH). 4 disordered regions span residues 491 to 514 (SSTQ…SRKS), 569 to 612 (SFVK…SVAS), 885 to 929 (PTKV…VPGD), and 1040 to 1079 (VAAG…GDEQ). 2 stretches are compositionally biased toward basic and acidic residues: residues 498–512 (KASE…DKSR) and 594–605 (ITEKKEKGKQLD). Over residues 1067-1079 (QPTSVQPPGGDEQ) the composition is skewed to polar residues. Residues 1463–1485 (FVCIFCDRTFRKEEEYTKHLRRH) form a C2H2-type 9 zinc finger.

Its subcellular location is the nucleus. It localises to the cytoplasm. Its function is as follows. Transcriptional repressor which binds neuron-restrictive silencer element (NRSE) and represses neuronal gene transcription in non-neuronal cells. Plays a role in the early development of the nervous system and is required for proper patterning of the neuroectoderm during gastrulation. This involves the correct speciation of the neuroepithelial domain and adequate development of the non-neural ectoderm. The chain is RE1-silencing transcription factor A (rest-a) from Xenopus laevis (African clawed frog).